The chain runs to 353 residues: Tetrahedral aminopeptidase (353 aa).

Zn(2+) contacts are provided by His68 and Asp182. Glu212 functions as the Proton acceptor in the catalytic mechanism. Zn(2+)-binding residues include Glu213, Asp235, and His323.

This sequence belongs to the peptidase M42 family. Homododecamer. The assembly of six dimers results in a tetrahedral-shaped structure; all 12 active sites are located on the inside of the tetrahedron. Substrate access is granted by four pores with a maximal diameter of 18 Angstroms, allowing only small peptides and unfolded proteins access to the active site. Beside the four entry ports, TET contains 12 small product release openings, which are large enough to allow passage of only single amino acid residues. Zn(2+) serves as cofactor. The cofactor is Co(2+).

Its activity is regulated as follows. Inhibited by EDTA and bestatin in vitro. Is insensitive to papain, antipain, chymostatin, leupeptin, pepstatin and aprotinin. Its function is as follows. Functions as an aminopeptidase, with a clear preference for leucine as the N-terminal amino acid. However, can also cleave moderately long polypeptide substrates of various compositions in a fairly unspecific manner. Has neither carboxypeptidase nor endoproteolytic activities, and it is devoid of N-terminal deblocking activity. Is involved in protein degradation, performing degradation of oligopeptides produced by the proteasome into single amino acids. This Pyrococcus horikoshii (strain ATCC 700860 / DSM 12428 / JCM 9974 / NBRC 100139 / OT-3) protein is Tetrahedral aminopeptidase (frvX).